A 459-amino-acid polypeptide reads, in one-letter code: Mitochondrial distribution and morphology protein 34 (459 aa).

The SMP-LTD domain maps to 1–190 (MSFRFNEAVF…LPSLIFNTSQ (190 aa)). The span at 338-347 (RSNSNDDNAK) shows a compositional bias: basic and acidic residues. Positions 338–375 (RSNSNDDNAKPRRRKIKCKKTRTPSNLQSQGEQAVDDS) are disordered. The segment covering 348-359 (PRRRKIKCKKTR) has biased composition (basic residues).

This sequence belongs to the MDM34 family. As to quaternary structure, component of the ER-mitochondria encounter structure (ERMES) or MDM complex, composed of MMM1, MDM10, MDM12 and MDM34. In terms of processing, ubiquitinated by a SCF (SKP1-CUL1-F-box protein) E3 ubiquitin-protein ligase complex containing the F-box protein MDM30. Ubiquitination is important for mitochondrial integrity.

It localises to the mitochondrion outer membrane. In terms of biological role, component of the ERMES/MDM complex, which serves as a molecular tether to connect the endoplasmic reticulum (ER) and mitochondria. Components of this complex are involved in the control of mitochondrial shape and protein biogenesis, and function in nonvesicular lipid trafficking between the ER and mitochondria. MDM34 is required for the interaction of the ER-resident membrane protein MMM1 and the outer mitochondrial membrane-resident beta-barrel protein MDM10. The chain is Mitochondrial distribution and morphology protein 34 from Saccharomyces cerevisiae (strain AWRI1631) (Baker's yeast).